The following is a 355-amino-acid chain: Serine endoprotease DegS (355 aa).

Topologically, residues 1–4 (MFVK) are cytoplasmic. The chain crosses the membrane as a helical span at residues 5 to 27 (LLRSVAIGLIVGAILLVAMPSLR). The Periplasmic portion of the chain corresponds to 28–355 (SLNPLSTPQF…VTIQEYPATN (328 aa)). Catalysis depends on charge relay system residues histidine 96 and aspartate 126. Residue threonine 184 coordinates substrate. Serine 201 serves as the catalytic Charge relay system. Residue 259-264 (IGIGGR) coordinates substrate. The PDZ domain occupies 281–326 (GIVVNEVSPDGPAANAGIQVNDLIISVDNKPAISALETMDQVAEIR). Tyrosine 351 contacts substrate.

This sequence belongs to the peptidase S1C family. In terms of assembly, homotrimer.

It localises to the cell inner membrane. The enzyme catalyses Acts on substrates that are at least partially unfolded. The cleavage site P1 residue is normally between a pair of hydrophobic residues, such as Val-|-Val.. Its activity is regulated as follows. Allosterically activated by the C-terminus of exposed OMP peptides (consensus Tyr-X-Phe-COOH); cleavage only occurs in the presence of peptides. Inhibited when RseB is bound to RseA. A site-1 protease (S1P) that cleaves the peptide bond between 'Val-148' and 'Ser-149' in RseA. Part of a regulated intramembrane proteolysis (RIP) cascade. When heat shock or other environmental stresses disrupt protein folding in the periplasm, DegS senses the accumulation of unassembled outer membrane porins (OMP) and then initiates RseA (anti sigma-E factor) degradation by cleaving its periplasmic domain, making it a substrate for subsequent cleavage by RseP. This cascade ultimately leads to the sigma-E-driven expression of a variety of factors dealing with folding stress in the periplasm and OMP assembly. Required for basal and stress-induced degradation of RseA. The protein is Serine endoprotease DegS (degS) of Escherichia coli O157:H7.